A 366-amino-acid polypeptide reads, in one-letter code: A-type ATP synthase subunit C (366 aa).

It belongs to the V-ATPase V0D/AC39 subunit family. In terms of assembly, has multiple subunits with at least A(3), B(3), C, D, E, F, H, I and proteolipid K(x).

The protein resides in the cell membrane. Its function is as follows. Component of the A-type ATP synthase that produces ATP from ADP in the presence of a proton gradient across the membrane. The chain is A-type ATP synthase subunit C from Thermococcus gammatolerans (strain DSM 15229 / JCM 11827 / EJ3).